A 349-amino-acid polypeptide reads, in one-letter code: Protein O-mannose kinase (349 aa).

Residues 1 to 19 (MGQQHGARNGLTHRELPRG) lie on the Cytoplasmic side of the membrane. The helical; Signal-anchor for type II membrane protein transmembrane segment at 20–42 (MGLLLAMALMNVVLYVCLDHLFI) threads the bilayer. The Lumenal portion of the chain corresponds to 43–349 (SPGRATEDPR…TVMSQTKEML (307 aa)). Asparagine 66, asparagine 164, and asparagine 219 each carry an N-linked (GlcNAc...) asparagine glycan. The Protein kinase domain occupies 80–349 (VRQLKLVGEG…TVMSQTKEML (270 aa)).

It belongs to the protein kinase superfamily. Ser/Thr protein kinase family. STKL subfamily.

The protein localises to the endoplasmic reticulum membrane. It catalyses the reaction 3-O-[beta-D-GalNAc-(1-&gt;3)-beta-D-GlcNAc-(1-&gt;4)-alpha-D-Man]-L-Thr-[protein] + ATP = 3-O-[beta-D-GalNAc-(1-&gt;3)-beta-D-GlcNAc-(1-&gt;4)-(O-6-P-alpha-D-Man)]-Thr-[protein] + ADP + H(+). Its function is as follows. Protein O-mannose kinase that specifically mediates phosphorylation at the 6-position of an O-mannose of the trisaccharide (N-acetylgalactosamine (GalNAc)-beta-1,3-N-acetylglucosamine (GlcNAc)-beta-1,4-mannose) to generate phosphorylated O-mannosyl trisaccharide (N-acetylgalactosamine-beta-1,3-N-acetylglucosamine-beta-1,4-(phosphate-6-)mannose). Phosphorylated O-mannosyl trisaccharide is a carbohydrate structure present in alpha-dystroglycan (DAG1), which is required for binding laminin G-like domain-containing extracellular proteins with high affinity. Only shows kinase activity when the GalNAc-beta-3-GlcNAc-beta-terminus is linked to the 4-position of O-mannose, suggesting that this disaccharide serves as the substrate recognition motif. The protein is Protein O-mannose kinase (Pomk) of Rattus norvegicus (Rat).